Reading from the N-terminus, the 426-residue chain is Potassium channel subfamily K member 2 (426 aa).

Residues methionine 1–threonine 61 lie on the Cytoplasmic side of the membrane. Important for GNG4 binding and L-glutamate release in astrocytes stretches follow at residues alanine 17–serine 38 and aspartate 51–threonine 61. The chain crosses the membrane as a helical span at residues valine 62 to alanine 82. 2 N-linked (GlcNAc...) asparagine glycosylation sites follow: asparagine 110 and asparagine 134. The segment at residues leucine 144–glycine 170 is an intramembrane region (pore-forming). Positions 157, 158, 159, and 160 each coordinate K(+). The interval threonine 157–asparagine 162 is selectivity filter 1. A helical membrane pass occupies residues isoleucine 172–valine 192. At glycine 193 to isoleucine 223 the chain is on the cytoplasmic side. A helical membrane pass occupies residues isoleucine 224–isoleucine 244. The segment at residues alanine 253–aspartate 283 is an intramembrane region (pore-forming). 4 residues coordinate K(+): threonine 266, isoleucine 267, glycine 268, and phenylalanine 269. A selectivity filter 2 region spans residues threonine 266–aspartate 271. Residues valine 288–glycine 308 form a helical membrane-spanning segment. Over aspartate 309–lysine 426 the chain is Cytoplasmic. Residues valine 313–arginine 326 form an interaction with AKAP5 region. The interval threonine 337–serine 385 is essential for chloroform and halothane sensitivity. The residue at position 348 (serine 348) is a Phosphoserine; by PKA.

The protein belongs to the two pore domain potassium channel (TC 1.A.1.8) family. Homodimer; disulfide-linked. Forms heterodimers with other 2-pore domain K(+) channel subunits, such as KCNK1, KCNK4, KCNK10 and KCNK18. Interacts with AKAP5; the channel is recruited to postsynaptic microdomains by AKAP5 where it can integrate neurotransmitter receptor signals. Part of a complex composed of AKAP5 and ADRB2. Upon AKAP5 binding, the channel is no longer sensitive to intracellular acidification, membrane stretch or arachidonic acid stimuli. Interacts with POPDC1; the interaction enhances KCNK2 surface expression and is inhibited by cAMP. Interacts (via N-terminus) with G-protein subunit GNG4 (via C-terminus); this interaction confers ion selectivity to L-glutamate and Cl(-) anions. Post-translationally, phosphorylation at Ser-348 controls the reversible conversion from a leak channel to a voltage-dependent channel. In terms of tissue distribution, detected in kidney, adrenal gland and brain where it is preferentially expressed in the amygdala but not found in thalamus, hypothalamus, hippocampus or substantia nigra.

It is found in the cell membrane. The protein resides in the endoplasmic reticulum membrane. Its subcellular location is the cell projection. It localises to the axon. The protein localises to the dendrite. It is found in the postsynaptic density membrane. The protein resides in the sarcolemma. It catalyses the reaction K(+)(in) = K(+)(out). It carries out the reaction L-glutamate(out) = L-glutamate(in). The enzyme catalyses chloride(in) = chloride(out). The catalysed reaction is Rb(+)(in) = Rb(+)(out). It catalyses the reaction Cs(+)(in) = Cs(+)(out). Its activity is regulated as follows. Activated by various stimuli including intracellular acidic pH, mechanical stretch and polyunsaturated fatty acids such as arachidonic acid. Activated by volatile anesthetics such as chloroform, halothane, and isoflurane. Its function is as follows. K(+) channel that conducts voltage-dependent outward rectifying currents upon membrane depolarization. Voltage sensing is coupled to K(+) electrochemical gradient in an 'ion flux gating' mode where outward but not inward ion flow opens the gate. Converts to voltage-independent 'leak' conductance mode upon stimulation by various stimuli including mechanical membrane stretch, acidic pH, heat and lipids. Reversibly converts between a voltage-insensitive K(+) 'leak' channel and a voltage-dependent outward rectifying K(+) channel in a phosphorylation-dependent manner. Homo- and heterodimerizes to form functional channels with distinct regulatory and gating properties. In trigeminal ganglia sensory neurons, the heterodimer of KCNK2/TREK-1 and KCNK18/TRESK inhibits neuronal firing and neurogenic inflammation by stabilizing the resting membrane potential at K(+) equilibrium potential as well as by regulating the threshold of action potentials and the spike frequency. At trigeminal A-beta afferent nerves, the heterodimer of KCNK2/TREK-1 and KCNK4/TRAAK is mostly coexpressed at nodes of Ranvier where it conducts voltage-independent mechanosensitive and thermosensitive currents, allowing rapid action potential repolarization, high speed and high frequence saltatory conduction on myelinated nerves to ensure prompt sensory responses. In hippocampal astrocytes, the heterodimer of KCNK2/TREK-1 and KCNK1/TWIK-1 allows passive K(+) conductance under basal conditions, but changes ion selectivity and becomes permeable to L-glutamate and Cl(-) ions upon binding to G-protein subunit GNG4 in stimulated astrocytes. Mediates rapid L-glutamate release in response to activation of G-protein-coupled receptors, such as F2R and CNR1. In hippocampal pyramidal neurons, the homodimer of KCNK2/TREK-1 contributes to gamma-aminobutyric acid (GABA) B-induced slow inhibitory postsynaptic potential. Associates with AKAP5 and Gs-protein-coupled receptor B2AR at postsynaptic dense bodies and converts to a leak channel no longer sensitive to stimulation by arachidonic acid, acidic pH or mechanical stress, nor inhibited by Gq-coupled receptors but still under the negative control of Gs-coupled receptors. Permeable to other monovalent cations such as Rb(+) and Cs(+). Functionally, does not display channel activity but reduces the channel activity of isoform 1 and isoform 2 and reduces cell surface expression of isoform 2. This Homo sapiens (Human) protein is Potassium channel subfamily K member 2.